The sequence spans 408 residues: UPF0761 membrane protein NMCC_0461 (408 aa).

Helical transmembrane passes span 43 to 63, 100 to 120, 139 to 159, 176 to 196, 210 to 230, and 248 to 268; these read LLAL…FPVF, LTAI…RTID, FLVY…GISF, WSGA…LWGL, AFVG…LFTW, and VPFF…GAVL.

This sequence belongs to the UPF0761 family.

The protein resides in the cell inner membrane. This Neisseria meningitidis serogroup C (strain 053442) protein is UPF0761 membrane protein NMCC_0461.